A 165-amino-acid polypeptide reads, in one-letter code: Heme oxygenase (165 aa).

Belongs to the heme oxygenase family.

The enzyme catalyses heme b + 3 reduced [NADPH--hemoprotein reductase] + 3 O2 = biliverdin IXalpha + CO + Fe(2+) + 3 oxidized [NADPH--hemoprotein reductase] + 3 H2O + H(+). Functionally, catalyzes the opening of the heme ring to form the open-chain tetrapyrrole biliverdin IX with the release of iron and carbon monoxide (CO). This chain is Heme oxygenase (bphO), found in Xanthomonas campestris pv. campestris (strain 8004).